The sequence spans 99 residues: RNA-binding protein Hfq (99 aa).

Residues 10–71 (DLFLNQLRKE…ISSILPSKPI (62 aa)) enclose the Sm domain. The interval 77 to 99 (VQNSQVQNTASQQSNNNQNQESK) is disordered.

This sequence belongs to the Hfq family. In terms of assembly, homohexamer.

Functionally, RNA chaperone that binds small regulatory RNA (sRNAs) and mRNAs to facilitate mRNA translational regulation in response to envelope stress, environmental stress and changes in metabolite concentrations. Also binds with high specificity to tRNAs. This Caldicellulosiruptor saccharolyticus (strain ATCC 43494 / DSM 8903 / Tp8T 6331) protein is RNA-binding protein Hfq.